A 367-amino-acid polypeptide reads, in one-letter code: DNA replication and repair protein RecF (367 aa).

30 to 37 (GENAQGKT) is a binding site for ATP.

This sequence belongs to the RecF family.

It localises to the cytoplasm. Its function is as follows. The RecF protein is involved in DNA metabolism; it is required for DNA replication and normal SOS inducibility. RecF binds preferentially to single-stranded, linear DNA. It also seems to bind ATP. This Chlamydia caviae (strain ATCC VR-813 / DSM 19441 / 03DC25 / GPIC) (Chlamydophila caviae) protein is DNA replication and repair protein RecF.